Consider the following 59-residue polypeptide: Photosystem II reaction center protein K (59 aa).

The propeptide occupies 1 to 22; it reads MLNIFSLICLNSALYSSSFFFG. Residues 30–50 form a helical membrane-spanning segment; the sequence is FLSPIVDFMPVIPLFFFLLAF.

As to quaternary structure, PSII is composed of 1 copy each of membrane proteins PsbA, PsbB, PsbC, PsbD, PsbE, PsbF, PsbH, PsbI, PsbJ, PsbK, PsbL, PsbM, PsbT, PsbX, PsbY, PsbZ, Psb30/Ycf12, at least 3 peripheral proteins of the oxygen-evolving complex and a large number of cofactors. It forms dimeric complexes. This protein, PsbL and plastoquinone-9 are found in PSII dimers but not seen in PSII monomers.

The protein resides in the plastid. It is found in the chloroplast thylakoid membrane. In terms of biological role, one of the components of the core complex of photosystem II (PSII). PSII is a light-driven water:plastoquinone oxidoreductase that uses light energy to abstract electrons from H(2)O, generating O(2) and a proton gradient subsequently used for ATP formation. It consists of a core antenna complex that captures photons, and an electron transfer chain that converts photonic excitation into a charge separation. May be involved in PSII dimerization. Its function is as follows. One of the components of the core complex of photosystem II (PSII). PSII is a light-driven water:plastoquinone oxidoreductase that uses light energy to abstract electrons from H(2)O, generating O(2) and a proton gradient subsequently used for ATP formation. It consists of a core antenna complex that captures photons, and an electron transfer chain that converts photonic excitation into a charge separation. This Spinacia oleracea (Spinach) protein is Photosystem II reaction center protein K.